The chain runs to 231 residues: 5'-methylthioadenosine/S-adenosylhomocysteine nucleosidase (231 aa).

Catalysis depends on Glu-12, which acts as the Proton acceptor. Substrate is bound by residues Gly-78, Met-153, and 174–175; that span reads ME. Asp-198 functions as the Proton donor in the catalytic mechanism.

It belongs to the PNP/UDP phosphorylase family. MtnN subfamily.

The enzyme catalyses S-adenosyl-L-homocysteine + H2O = S-(5-deoxy-D-ribos-5-yl)-L-homocysteine + adenine. The catalysed reaction is S-methyl-5'-thioadenosine + H2O = 5-(methylsulfanyl)-D-ribose + adenine. It carries out the reaction 5'-deoxyadenosine + H2O = 5-deoxy-D-ribose + adenine. It functions in the pathway amino-acid biosynthesis; L-methionine biosynthesis via salvage pathway; S-methyl-5-thio-alpha-D-ribose 1-phosphate from S-methyl-5'-thioadenosine (hydrolase route): step 1/2. In terms of biological role, catalyzes the irreversible cleavage of the glycosidic bond in both 5'-methylthioadenosine (MTA) and S-adenosylhomocysteine (SAH/AdoHcy) to adenine and the corresponding thioribose, 5'-methylthioribose and S-ribosylhomocysteine, respectively. Also cleaves 5'-deoxyadenosine, a toxic by-product of radical S-adenosylmethionine (SAM) enzymes, into 5-deoxyribose and adenine. The sequence is that of 5'-methylthioadenosine/S-adenosylhomocysteine nucleosidase from Bacillus subtilis (strain 168).